Reading from the N-terminus, the 166-residue chain is Interferon gamma (166 aa).

A signal peptide spans 1-23 (MNYTSYILAFQLCVILCSSGYYC). Gln-24 bears the Pyrrolidone carboxylic acid mark. Asn-39 and Asn-106 each carry an N-linked (GlcNAc...) asparagine glycan.

This sequence belongs to the type II (or gamma) interferon family. As to quaternary structure, homodimer. Interacts with IFNGR1 (via extracellular domain); this interaction promotes IFNGR1 dimerization. In terms of tissue distribution, released primarily from activated T lymphocytes.

The protein localises to the secreted. Type II interferon produced by immune cells such as T-cells and NK cells that plays crucial roles in antimicrobial, antiviral, and antitumor responses by activating effector immune cells and enhancing antigen presentation. Primarily signals through the JAK-STAT pathway after interaction with its receptor IFNGR1 to affect gene regulation. Upon IFNG binding, IFNGR1 intracellular domain opens out to allow association of downstream signaling components JAK2, JAK1 and STAT1, leading to STAT1 activation, nuclear translocation and transcription of IFNG-regulated genes. Many of the induced genes are transcription factors such as IRF1 that are able to further drive regulation of a next wave of transcription. Plays a role in class I antigen presentation pathway by inducing a replacement of catalytic proteasome subunits with immunoproteasome subunits. In turn, increases the quantity, quality, and repertoire of peptides for class I MHC loading. Increases the efficiency of peptide generation also by inducing the expression of activator PA28 that associates with the proteasome and alters its proteolytic cleavage preference. Up-regulates as well MHC II complexes on the cell surface by promoting expression of several key molecules such as cathepsins B/CTSB, H/CTSH, and L/CTSL. Participates in the regulation of hematopoietic stem cells during development and under homeostatic conditions by affecting their development, quiescence, and differentiation. This chain is Interferon gamma (IFNG), found in Ailuropoda melanoleuca (Giant panda).